The primary structure comprises 377 residues: Flagellar P-ring protein (377 aa).

The signal sequence occupies residues 1-33 (MRYPVSTGIAAPAWFAFFCAWAGLWTFSLPVQA).

The protein belongs to the FlgI family. In terms of assembly, the basal body constitutes a major portion of the flagellar organelle and consists of four rings (L,P,S, and M) mounted on a central rod.

It is found in the periplasm. The protein resides in the bacterial flagellum basal body. Its function is as follows. Assembles around the rod to form the L-ring and probably protects the motor/basal body from shearing forces during rotation. The protein is Flagellar P-ring protein of Nitrosospira multiformis (strain ATCC 25196 / NCIMB 11849 / C 71).